Here is a 222-residue protein sequence, read N- to C-terminus: Peroxisomal membrane protein 11-4 (222 aa).

Residues 1–81 (MSAGDTLDKL…LNGLRRAPGE (81 aa)) are Cytoplasmic-facing. Residues 82-102 (FGALAVLANAGEMVYFFFDHF) form a helical membrane-spanning segment. Over 103–196 (TWLSRVGVLD…IGIADIEPNP (94 aa)) the chain is Lumenal. Residues 197 to 217 (FCNHAVTLGISGLVSAWAGWY) traverse the membrane as a helical segment. Topologically, residues 218 to 222 (RNWPS) are cytoplasmic.

It belongs to the peroxin-11 family. In terms of tissue distribution, expressed in seedlings, shoots, leaf sheaths and flag leaf.

The protein localises to the peroxisome membrane. Functionally, involved in peroxisomal proliferation. The sequence is that of Peroxisomal membrane protein 11-4 (PEX11-4) from Oryza sativa subsp. indica (Rice).